The following is a 370-amino-acid chain: Metalloproteinase (370 aa).

Positions 1 to 15 (MYLAYIFFLFATVSA) are cleaved as a signal peptide. The region spanning 170–370 (IVIEVLLVTD…DNYGKIFRMF (201 aa)) is the Peptidase M12B domain. The N-linked (GalNAc...) asparagine glycan is linked to Asn226. Zn(2+) is bound at residue His320. Residue Glu321 is part of the active site. Positions 324 and 330 each coordinate Zn(2+).

Belongs to the venom metalloproteinase (M12B) family. Expressed by the venom gland.

It localises to the secreted. In terms of biological role, metalloprotease that may disrupt the cell matrix and the process of clotting blood or hemolymph. This is Metalloproteinase from Tityus obscurus (Amazonian scorpion).